The chain runs to 246 residues: Tyrosine recombinase XerD-like (246 aa).

In terms of domain architecture, Core-binding (CB) spans 1 to 72 (MINDINNFIE…AVNQFLFFLY (72 aa)). The 163-residue stretch at 84–246 (QETEKITLAQ…TPITLERYYR (163 aa)) folds into the Tyr recombinase domain. Catalysis depends on residues lysine 149 and arginine 212. The active-site O-(3'-phospho-DNA)-tyrosine intermediate is the tyrosine 244.

It belongs to the 'phage' integrase family. XerD-like subfamily.

It localises to the cytoplasm. Functionally, putative tyrosine recombinase. Not involved in the cutting and rejoining of the recombining DNA molecules on dif(SL) site. This Streptococcus agalactiae serotype V (strain ATCC BAA-611 / 2603 V/R) protein is Tyrosine recombinase XerD-like.